Here is a 408-residue protein sequence, read N- to C-terminus: FAD-dependent monooxygenase nscC (408 aa).

Positions 1-20 (MASRLPILIIGAGISGLTTA) are cleaved as a signal peptide. E34 and A45 together coordinate FAD. N-linked (GlcNAc...) asparagine glycans are attached at residues N91 and N103. Position 119 (R119) interacts with FAD. N-linked (GlcNAc...) asparagine glycosylation is found at N170 and N231. The FAD site is built by D328 and G341.

The protein belongs to the paxM FAD-dependent monooxygenase family. FAD serves as cofactor.

It functions in the pathway secondary metabolite biosynthesis. Its function is as follows. FAD-dependent monooxygenase; part of the gene cluster that mediates the biosynthesis of neosartoricin, a prenylated anthracenone that exhibits T-cell antiproliferative activity, suggestive of a physiological role as an immunosuppressive agent. The non-reducing polyketide synthase nscA probably synthesizes and cyclizes the decaketide backbone. The hydrolase nscB then mediates the product release through hydrolysis followed by spontaneous decarboxylation. The prenyltransferase nscD catalyzes the addition of the dimethylallyl group to the aromatic C5. The FAD-dependent monooxygenase nscC is then responsible for the stereospecific hydroxylation at C2. There is no gene encoding O-acetyltransferase in the nsc gene cluster; thus, the last step of 2-O-acetylation leading to neosartoricin may be catalyzed by an unidentified O-acetyltransferase. This chain is FAD-dependent monooxygenase nscC, found in Aspergillus fumigatus (strain ATCC MYA-4609 / CBS 101355 / FGSC A1100 / Af293) (Neosartorya fumigata).